Reading from the N-terminus, the 303-residue chain is Methionyl-tRNA formyltransferase (303 aa).

Serine 108–proline 111 is a binding site for (6S)-5,6,7,8-tetrahydrofolate.

The protein belongs to the Fmt family.

It catalyses the reaction L-methionyl-tRNA(fMet) + (6R)-10-formyltetrahydrofolate = N-formyl-L-methionyl-tRNA(fMet) + (6S)-5,6,7,8-tetrahydrofolate + H(+). In terms of biological role, attaches a formyl group to the free amino group of methionyl-tRNA(fMet). The formyl group appears to play a dual role in the initiator identity of N-formylmethionyl-tRNA by promoting its recognition by IF2 and preventing the misappropriation of this tRNA by the elongation apparatus. This chain is Methionyl-tRNA formyltransferase, found in Rickettsia peacockii (strain Rustic).